Consider the following 205-residue polypeptide: Outer-membrane lipoprotein carrier protein (205 aa).

Positions 1–19 are cleaved as a signal peptide; it reads MKKIIICFIFVFSINISFA.

Belongs to the LolA family. Monomer.

It is found in the periplasm. Its function is as follows. Participates in the translocation of lipoproteins from the inner membrane to the outer membrane. Only forms a complex with a lipoprotein if the residue after the N-terminal Cys is not an aspartate (The Asp acts as a targeting signal to indicate that the lipoprotein should stay in the inner membrane). The chain is Outer-membrane lipoprotein carrier protein from Francisella tularensis subsp. novicida (strain U112).